The primary structure comprises 526 residues: Probable 1,4-alpha-glucan branching enzyme MT3115 (526 aa).

Catalysis depends on glutamate 205, which acts as the Nucleophile. Substrate is bound by residues arginine 251 and glycine 268. Aspartate 344 (proton donor) is an active-site residue. Residues tryptophan 396 and aspartate 462 each coordinate substrate.

The protein belongs to the glycosyl hydrolase 57 family.

The catalysed reaction is Transfers a segment of a (1-&gt;4)-alpha-D-glucan chain to a primary hydroxy group in a similar glucan chain.. Functionally, catalyzes the formation of branch points in alpha-glucans by cleavage of an alpha-1,4 glycosidic bond and subsequent transfer of the cleaved-off oligosaccharide to a new alpha-1,6 position. Is probably involved in the biosynthesis of 6-O-methylglucosyl lipopolysaccharides (MGLP). This is Probable 1,4-alpha-glucan branching enzyme MT3115 from Mycobacterium tuberculosis (strain CDC 1551 / Oshkosh).